We begin with the raw amino-acid sequence, 292 residues long: NIF3-like protein 1 (292 aa).

It belongs to the GTP cyclohydrolase I type 2/NIF3 family.

This Drosophila melanogaster (Fruit fly) protein is NIF3-like protein 1 (anon-35F/36A).